Consider the following 257-residue polypeptide: RNA polymerase sigma-G factor (257 aa).

Positions 66–79 (DLFQVGCIGLIKSI) match the Polymerase core binding motif. A DNA-binding region (H-T-H motif) is located at residues 228 to 247 (QMEVADEIGISQAQVSRLEK).

It belongs to the sigma-70 factor family.

Functionally, sigma factors are initiation factors that promote the attachment of RNA polymerase to specific initiation sites and are then released. This sigma factor is responsible for the expression of sporulation specific genes. The chain is RNA polymerase sigma-G factor (sigG) from Clostridium acetobutylicum (strain ATCC 824 / DSM 792 / JCM 1419 / IAM 19013 / LMG 5710 / NBRC 13948 / NRRL B-527 / VKM B-1787 / 2291 / W).